A 111-amino-acid polypeptide reads, in one-letter code: Cytochrome c (111 aa).

Ala-1 carries the N-acetylalanine modification. Heme c is bound by residues Cys-22, Cys-25, and His-26. Lys-80 is subject to N6,N6,N6-trimethyllysine. Met-88 contacts heme c. The residue at position 94 (Lys-94) is an N6,N6,N6-trimethyllysine.

This sequence belongs to the cytochrome c family. Post-translationally, binds 1 heme c group covalently per subunit.

The protein localises to the mitochondrion intermembrane space. Its function is as follows. Electron carrier protein. The oxidized form of the cytochrome c heme group can accept an electron from the heme group of the cytochrome c1 subunit of cytochrome reductase. Cytochrome c then transfers this electron to the cytochrome oxidase complex, the final protein carrier in the mitochondrial electron-transport chain. The protein is Cytochrome c of Brassica napus (Rape).